We begin with the raw amino-acid sequence, 74 residues long: UPF0346 protein PEPE_1063 (74 aa).

It belongs to the UPF0346 family.

This is UPF0346 protein PEPE_1063 from Pediococcus pentosaceus (strain ATCC 25745 / CCUG 21536 / LMG 10740 / 183-1w).